A 68-amino-acid polypeptide reads, in one-letter code: P21 prophage-derived head-stabilizing protein (68 aa).

This sequence belongs to the lambda phage gpW family.

The protein is P21 prophage-derived head-stabilizing protein of Escherichia coli O6:H1 (strain CFT073 / ATCC 700928 / UPEC).